Consider the following 181-residue polypeptide: Ribonuclease HII (181 aa).

One can recognise an RNase H type-2 domain in the interval 1–181 (MICGIDEVGR…SLHRKNFKLI (181 aa)). Residues D6, E7, and D98 each contribute to the a divalent metal cation site.

Belongs to the RNase HII family. Requires Mn(2+) as cofactor. Mg(2+) serves as cofactor.

The protein resides in the cytoplasm. The catalysed reaction is Endonucleolytic cleavage to 5'-phosphomonoester.. Functionally, endonuclease that specifically degrades the RNA of RNA-DNA hybrids. The protein is Ribonuclease HII (rnhB) of Borreliella burgdorferi (strain ATCC 35210 / DSM 4680 / CIP 102532 / B31) (Borrelia burgdorferi).